Consider the following 280-residue polypeptide: 3-methyl-2-oxobutanoate hydroxymethyltransferase (280 aa).

Mg(2+) contacts are provided by D45 and D84. Residues 45–46, D84, and K114 contribute to the 3-methyl-2-oxobutanoate site; that span reads DS. E116 contributes to the Mg(2+) binding site. E183 functions as the Proton acceptor in the catalytic mechanism.

It belongs to the PanB family. In terms of assembly, homodecamer; pentamer of dimers. Mg(2+) is required as a cofactor.

It is found in the cytoplasm. It catalyses the reaction 3-methyl-2-oxobutanoate + (6R)-5,10-methylene-5,6,7,8-tetrahydrofolate + H2O = 2-dehydropantoate + (6S)-5,6,7,8-tetrahydrofolate. The protein operates within cofactor biosynthesis; (R)-pantothenate biosynthesis; (R)-pantoate from 3-methyl-2-oxobutanoate: step 1/2. Its function is as follows. Catalyzes the reversible reaction in which hydroxymethyl group from 5,10-methylenetetrahydrofolate is transferred onto alpha-ketoisovalerate to form ketopantoate. The polypeptide is 3-methyl-2-oxobutanoate hydroxymethyltransferase (Clostridium kluyveri (strain ATCC 8527 / DSM 555 / NBRC 12016 / NCIMB 10680 / K1)).